Consider the following 139-residue polypeptide: Large ribosomal subunit protein uL16 (139 aa).

The protein belongs to the universal ribosomal protein uL16 family. Part of the 50S ribosomal subunit.

Its function is as follows. Binds 23S rRNA and is also seen to make contacts with the A and possibly P site tRNAs. The polypeptide is Large ribosomal subunit protein uL16 (Chlorobium phaeobacteroides (strain BS1)).